The sequence spans 318 residues: Protein W (318 aa).

Disordered stretches follow at residues Met1 to Glu23 and Ser38 to Ala318. The span at Ile7 to Gly20 shows a compositional bias: basic and acidic residues. Polar residues predominate over residues Leu50–Gly59. Ser68 is subject to Phosphoserine; by host. Residues Arg83–Ala101 show a composition bias toward basic and acidic residues. Ser125 carries the post-translational modification Phosphoserine; by host. Positions Gly150 to Asp168 are enriched in basic and acidic residues. Positions Ala191–Ala206 are enriched in polar residues. Phosphoserine; by host is present on residues Ser192, Ser249, Ser257, and Ser260.

The protein is Protein W (P/V/C) of Sendai virus (strain Harris) (SeV).